We begin with the raw amino-acid sequence, 154 residues long: MGAQSHSLEITSSVSAEKIFSGIVLDVDTVIPKAAPGAYKSVEVKGDGGAGTVRIITLPEGSPITSMTVRTDAVNKEALTYDSTVIDGDILLGFIESIETHLVVVPTADGGSITKTTAIFHTKGDAVVPEENIKFADAQNTALFKAIEAYLIAN.

Belongs to the BetVI family. Homodimer.

The sequence is that of Major allergen Dau c 1 from Daucus carota (Wild carrot).